Here is a 130-residue protein sequence, read N- to C-terminus: Transcription antitermination protein NusB (130 aa).

This sequence belongs to the NusB family.

Functionally, involved in transcription antitermination. Required for transcription of ribosomal RNA (rRNA) genes. Binds specifically to the boxA antiterminator sequence of the ribosomal RNA (rrn) operons. In Geobacillus kaustophilus (strain HTA426), this protein is Transcription antitermination protein NusB.